Consider the following 73-residue polypeptide: uncharacterized protein (73 aa).

Residues 48-73 (AKEPEKKTPSMEAKATSLSPNKASAS) form a disordered region. Residues 63-73 (TSLSPNKASAS) are compositionally biased toward polar residues.

This is an uncharacterized protein from Saccharomyces cerevisiae (strain ATCC 204508 / S288c) (Baker's yeast).